Here is a 130-residue protein sequence, read N- to C-terminus: MDEKEFKRLLRVRARLKRKKPRFLRQEWWRYPKFKNDPKWRRPKGIDSKMRLKLKGKPRSPSIGWSSPRLVRGLHPSGYEEVLIHNVKELEKLDPKRQAARIAHTVGKKKRIEILKRAQELGIKVLNPQL.

The protein belongs to the eukaryotic ribosomal protein eL32 family.

In Pyrococcus abyssi (strain GE5 / Orsay), this protein is Large ribosomal subunit protein eL32 (rpl32e).